Consider the following 721-residue polypeptide: Vacuolar transporter chaperone complex subunit 4 (721 aa).

An SPX domain is found at 1–148 (MKFGEHLSKS…GFILKPVFQV (148 aa)). Residues 1 to 630 (MKFGEHLSKS…PKVYFATERT (630 aa)) are Cytoplasmic-facing. Lys-75 is covalently cross-linked (Glycyl lysine isopeptide (Lys-Gly) (interchain with G-Cter in ubiquitin)). Residues 126–133 (GFQKIIKK) form an important for inositol polyphosphate binding region. Lys-200, Arg-264, Arg-266, Lys-281, Lys-294, Tyr-359, and Arg-361 together coordinate ATP. Glu-426 lines the Mn(2+) pocket. Lys-458 is a catalytic residue. Residues 489 to 512 (PLPTNIEITRPGRSDNEDNDFDED) are disordered. Transmembrane regions (helical) follow at residues 631-651 (YLSWLSISILLGGVSTTLLTY) and 652-672 (GSPTAMIGSIGFFITSLAVLI). Over 673–699 (RTVMVYAKRVVNIRLKRAVDYEDKIGP) the chain is Cytoplasmic. The helical transmembrane segment at 700–720 (GMVSVFLILSILFSFFCNLVA) threads the bilayer. Lys-721 is a topological domain (vacuolar).

Belongs to the VTC4 family. As to quaternary structure, the VTC core complex is an integral membrane heterooligomer composed of the catalytic subunit VTC4 and the accessory subunits VTC1, VTC2 and VTC3. The complex exists in 2 different sub-complexes: VTC1-VTC2-VCT4 and VCT1-VTC3-VTC4. The VCT1-VTC3-VTC4 subcomplex is mostly found on the vacuolar membrane. The VTC1-VTC2-VCT4 subcomplex is observed in the cell periphery, probably ER and nuclear envelope, but localizes to the vacuole under phosphate starvation. Each subunit contains 3 transmembrane helices. VTC1 is a small membrane protein without hydrophilic domain. VTC2, VTC3 and VTC4 are related and have 2 hydrophilic domains that face the cytosol, an N-terminal SPX domain and the central core domain. The central core in VTC4 is the catalytic domain, with the essential catalytic lysine replaced by isoleucine and leucine in VTC2 and VTC3, respectively. The core complex associates with the accessory subunit VTC5. The complex interacts with the v-SNARE NYV1 and with the V(0) subunit of V-ATPase VPH1. The cofactor is Mn(2+).

The protein resides in the vacuole membrane. It is found in the cytoplasm. The protein localises to the cell cortex. It localises to the endoplasmic reticulum membrane. Its subcellular location is the cytoplasmic vesicle. The protein resides in the autophagosome membrane. It carries out the reaction [phosphate](n) + ATP = [phosphate](n+1) + ADP. Its activity is regulated as follows. Activity of the enzyme is Mn(2+)-dependent and enhanced in the presence of pyrophosphate (PPi). Catalytic subunit of the vacuolar transporter chaperone (VTC) complex. The VTC complex acts as a vacuolar polyphosphate polymerase that catalyzes the synthesis of inorganic polyphosphate (polyP) via transfer of phosphate from ATP to a growing polyP chain, releasing ADP. VTC exposes its catalytic domain VTC4 to the cytosol, where the growing polyP chain winds through a tunnel-shaped pocket, integrating cytoplasmic polymer synthesis with polyP membrane translocation. The VTC complex carries 9 vacuolar transmembrane domains, which are likely to constitute the translocation channel into the organelle lumen. PolyP synthesis is tightly coupled to its transport into the vacuole lumen, in order to avoid otherwise toxic intermediates in the cytosol, and it depends on the proton gradient across the membrane, formed by V-ATPase. The VTC complex also plays a role in vacuolar membrane fusion. Required for SEC18/NSF activity in SNARE priming, membrane binding of LMA1 and V(0) trans-complex formation. Binds inositol hexakisphosphate (Ins6P) and similar inositol polyphosphates, such as 5-diphospho-inositol pentakisphosphate (5-InsP7); these are important intracellular signaling molecules. Inositol polyphosphate binding promotes vacuolar polyphosphate synthesis. The VTC complex is required for microautophagy. It is a constituent of autophagic tubes and is required for scission of microautophagic vesicles from these tubes. This chain is Vacuolar transporter chaperone complex subunit 4, found in Saccharomyces cerevisiae (strain ATCC 204508 / S288c) (Baker's yeast).